A 51-amino-acid chain; its full sequence is Large ribosomal subunit protein bL33 (51 aa).

Belongs to the bacterial ribosomal protein bL33 family.

In Pseudoalteromonas translucida (strain TAC 125), this protein is Large ribosomal subunit protein bL33.